Reading from the N-terminus, the 524-residue chain is Probable serine/threonine-protein kinase WNK10 (524 aa).

Residues 16-273 (IRYNDVLGRG…ALELLKDQLL (258 aa)) form the Protein kinase domain. ATP contacts are provided by residues 96 to 99 (TELF) and lysine 146. The Proton acceptor role is filled by aspartate 163. Serine 477 carries the phosphoserine modification. Residues 480–523 (SNKQSEDLKTELNVIESQYNQSCQRLLRMKEEAIEKAKRKWMKL) are a coiled coil.

Belongs to the protein kinase superfamily. Ser/Thr protein kinase family. WNK subfamily.

It carries out the reaction L-seryl-[protein] + ATP = O-phospho-L-seryl-[protein] + ADP + H(+). It catalyses the reaction L-threonyl-[protein] + ATP = O-phospho-L-threonyl-[protein] + ADP + H(+). Functionally, may regulate flowering time by modulating the photoperiod pathway. This chain is Probable serine/threonine-protein kinase WNK10 (WNK10), found in Arabidopsis thaliana (Mouse-ear cress).